A 582-amino-acid polypeptide reads, in one-letter code: MPDATGVIARNPFEEAPSRLNQYTPEEAAALQARLEKKLGPEYISSRPGAAGLKVHYLAADKCINLANEVFGFNGWSSSIQNIQIDFVDESPNTGKVSLGLSVIVRVTLKDGAYHEDLGYGHIENCKGKAAAFEKAKKEATTDALKRALRNFGNVLGNCIYDKDYISKVSKLKTVPSKLDVGDLHRHPDFAPIKKEPMRVKPSLEDDDLPPNPSIAGRNTSTNSAADMDAEFGSDVFDEADFNVGEGEYPDGIVAEDTQKRHQPPTPVGRPNAHLNLPKHALGAQASGNQHVVTPSKPERPMNLAPAGRQIPNQALNNRPFPPPAQNQYTNQRQSVPLPGSNGGLQNGRSIPLGQRASNGMATGSDAGAQVPIKQEHGAKQPNPAPQNTAVPATPGINGQGPPVVGFLSARGADMLRENPHSAATVAPAFNPHAESPSIRKTAGVDHTKSIPISKPMLAGSASPLSNQTRDFINPSAEMHRKIGAPSGSVVGGPMNRGPSVSSYRPLTRPNVDPKAAAQNNTAAANRMAPNMNGKRPPLNDVTNETLPGGNGCTPAPGLNDPKRAKYDESMSAQQHQQQHQH.

The DNA-binding element occupies 146–150 (KRALR). The segment covering 194–204 (KKEPMRVKPSL) has biased composition (basic and acidic residues). Disordered stretches follow at residues 194–226 (KKEP…NSAA), 310–400 (QIPN…INGQ), and 485–582 (APSG…QHQH). Over residues 326–335 (QNQYTNQRQS) the composition is skewed to polar residues. The segment covering 516-529 (AAAQNNTAAANRMA) has biased composition (low complexity).

It belongs to the RAD52 family. Part of a complex that includes RAD51, RAD52 and RAD59.

The protein resides in the nucleus. In terms of biological role, involved in DNA double-strand break (DSB) repair and recombination. Promotes the annealing of complementary single-stranded DNA and by stimulation of the RAD51 recombinase. The polypeptide is DNA repair and recombination protein radC (radC) (Emericella nidulans (strain FGSC A4 / ATCC 38163 / CBS 112.46 / NRRL 194 / M139) (Aspergillus nidulans)).